The primary structure comprises 338 residues: Phenylalanine--tRNA ligase alpha subunit (338 aa).

Residues 71–101 form a disordered region; the sequence is QFEEKRSSLSQQTSSSDTYQSLPDLTLPGRQ. A compositionally biased stretch (low complexity) spans 78-92; it reads SLSQQTSSSDTYQSL. Mg(2+) is bound at residue Glu-253.

Belongs to the class-II aminoacyl-tRNA synthetase family. Phe-tRNA synthetase alpha subunit type 1 subfamily. In terms of assembly, tetramer of two alpha and two beta subunits. Requires Mg(2+) as cofactor.

Its subcellular location is the cytoplasm. The catalysed reaction is tRNA(Phe) + L-phenylalanine + ATP = L-phenylalanyl-tRNA(Phe) + AMP + diphosphate + H(+). This Desulfotalea psychrophila (strain LSv54 / DSM 12343) protein is Phenylalanine--tRNA ligase alpha subunit.